The chain runs to 357 residues: Chorismate synthase (357 aa).

Positions 38–49 are enriched in basic and acidic residues; that stretch reads EKDIQPDLDRRK. Positions 38–60 are disordered; the sequence is EKDIQPDLDRRKPGTSRYTTPRR. Residues Arg-48 and Arg-54 each contribute to the NADP(+) site. Residues 125–127, 243–244, Gly-283, 298–302, and Arg-324 contribute to the FMN site; these read RSS, NA, and KPTSS.

This sequence belongs to the chorismate synthase family. Homotetramer. It depends on FMNH2 as a cofactor.

The catalysed reaction is 5-O-(1-carboxyvinyl)-3-phosphoshikimate = chorismate + phosphate. It functions in the pathway metabolic intermediate biosynthesis; chorismate biosynthesis; chorismate from D-erythrose 4-phosphate and phosphoenolpyruvate: step 7/7. In terms of biological role, catalyzes the anti-1,4-elimination of the C-3 phosphate and the C-6 proR hydrogen from 5-enolpyruvylshikimate-3-phosphate (EPSP) to yield chorismate, which is the branch point compound that serves as the starting substrate for the three terminal pathways of aromatic amino acid biosynthesis. This reaction introduces a second double bond into the aromatic ring system. The chain is Chorismate synthase from Haemophilus influenzae (strain PittGG).